A 335-amino-acid polypeptide reads, in one-letter code: Tetraacyldisaccharide 4'-kinase (335 aa).

59 to 66 (TAGGNGKT) provides a ligand contact to ATP.

The protein belongs to the LpxK family.

It catalyses the reaction a lipid A disaccharide + ATP = a lipid IVA + ADP + H(+). It functions in the pathway glycolipid biosynthesis; lipid IV(A) biosynthesis; lipid IV(A) from (3R)-3-hydroxytetradecanoyl-[acyl-carrier-protein] and UDP-N-acetyl-alpha-D-glucosamine: step 6/6. Transfers the gamma-phosphate of ATP to the 4'-position of a tetraacyldisaccharide 1-phosphate intermediate (termed DS-1-P) to form tetraacyldisaccharide 1,4'-bis-phosphate (lipid IVA). The sequence is that of Tetraacyldisaccharide 4'-kinase from Aliivibrio salmonicida (strain LFI1238) (Vibrio salmonicida (strain LFI1238)).